The chain runs to 329 residues: Haptoglobin (329 aa).

A glycan (N-linked (GlcNAc...) asparagine) is linked at Asn9. Residues 13–70 (VSLPKPPVIENGYVEHMIRYQCKPFYKLHTEGDGVYTLNSEKHWTNKAVGEKLPECEA) form the Sushi domain. 2 cysteine pairs are disulfide-bonded: Cys34/Cys68 and Cys72/Cys189. A propeptide is located at residue Arg84. Positions 85–327 (IMGGSVDAKG…VLAWVQETIA (243 aa)) constitute a Peptidase S1 domain. Residues Asn107 and Asn214 are each glycosylated (N-linked (GlcNAc...) asparagine). 2 disulfide bridges follow: Cys232-Cys263 and Cys274-Cys304. The interaction with CD163 stretch occupies residues 241–246 (VPEKKS).

This sequence belongs to the peptidase S1 family. As to quaternary structure, tetramer of two alpha and two beta chains; disulfide-linked. The hemoglobin/haptoglobin complex is composed of a haptoglobin dimer bound to two hemoglobin alpha-beta dimers. Interacts with CD163. Interacts with ERGIC3. As to expression, expressed by the liver and secreted in plasma.

The protein resides in the secreted. Its subcellular location is the extracellular space. Its function is as follows. As a result of hemolysis, hemoglobin is found to accumulate in the kidney and is secreted in the urine. Haptoglobin captures, and combines with free plasma hemoglobin to allow hepatic recycling of heme iron and to prevent kidney damage. Haptoglobin also acts as an antioxidant, has antibacterial activity and plays a role in modulating many aspects of the acute phase response. Hemoglobin/haptoglobin complexes are rapidly cleared by the macrophage CD163 scavenger receptor expressed on the surface of liver Kupfer cells through an endocytic lysosomal degradation pathway. This is Haptoglobin (HP) from Canis lupus familiaris (Dog).